The sequence spans 496 residues: Pup--protein ligase (496 aa).

Glu30 serves as a coordination point for Mg(2+). Residue Arg73 coordinates ATP. Residue Tyr75 participates in Mg(2+) binding. Asp77 functions as the Proton acceptor in the catalytic mechanism. Glu83 is a Mg(2+) binding site. Positions 86 and 450 each coordinate ATP.

Belongs to the Pup ligase/Pup deamidase family. Pup-conjugating enzyme subfamily.

The enzyme catalyses ATP + [prokaryotic ubiquitin-like protein]-L-glutamate + [protein]-L-lysine = ADP + phosphate + N(6)-([prokaryotic ubiquitin-like protein]-gamma-L-glutamyl)-[protein]-L-lysine.. It functions in the pathway protein degradation; proteasomal Pup-dependent pathway. The protein operates within protein modification; protein pupylation. Its function is as follows. Catalyzes the covalent attachment of the prokaryotic ubiquitin-like protein modifier Pup to the proteasomal substrate proteins, thereby targeting them for proteasomal degradation. This tagging system is termed pupylation. The ligation reaction involves the side-chain carboxylate of the C-terminal glutamate of Pup and the side-chain amino group of a substrate lysine. This chain is Pup--protein ligase, found in Bifidobacterium animalis subsp. lactis (strain AD011).